A 29-amino-acid polypeptide reads, in one-letter code: Cytochrome b6-f complex subunit 8 (29 aa).

Residues I3 to V23 traverse the membrane as a helical segment.

The protein belongs to the PetN family. As to quaternary structure, the 4 large subunits of the cytochrome b6-f complex are cytochrome b6, subunit IV (17 kDa polypeptide, PetD), cytochrome f and the Rieske protein, while the 4 small subunits are PetG, PetL, PetM and PetN. The complex functions as a dimer.

It localises to the plastid. It is found in the chloroplast thylakoid membrane. Functionally, component of the cytochrome b6-f complex, which mediates electron transfer between photosystem II (PSII) and photosystem I (PSI), cyclic electron flow around PSI, and state transitions. The chain is Cytochrome b6-f complex subunit 8 from Staurastrum punctulatum (Green alga).